The following is a 166-amino-acid chain: Small ribosomal subunit protein bS18m (166 aa).

Residues 1–31 constitute a mitochondrion transit peptide; it reads MLGRRIFSPAPNRGFILCNLIQSNNSTRRGF. A disordered region spans residues 29-48; it reads RGFSDNRKFNERNSEASSNV. The span at 30-42 shows a compositional bias: basic and acidic residues; it reads GFSDNRKFNERNS.

The protein belongs to the bacterial ribosomal protein bS18 family. Component of the mitochondrial small ribosomal subunit (mt-SSU). Mature yeast 74S mitochondrial ribosomes consist of a small (37S) and a large (54S) subunit. The 37S small subunit contains a 15S ribosomal RNA (15S mt-rRNA) and at least 32 different proteins. The 54S large subunit contains a 21S rRNA (21S mt-rRNA) and at least 45 different proteins.

Its subcellular location is the mitochondrion. Its function is as follows. Component of the mitochondrial ribosome (mitoribosome), a dedicated translation machinery responsible for the synthesis of mitochondrial genome-encoded proteins, including at least some of the essential transmembrane subunits of the mitochondrial respiratory chain. The mitoribosomes are attached to the mitochondrial inner membrane and translation products are cotranslationally integrated into the membrane. In Schizosaccharomyces pombe (strain 972 / ATCC 24843) (Fission yeast), this protein is Small ribosomal subunit protein bS18m (rsm18).